The primary structure comprises 514 residues: RNA-binding region-containing protein 3 (514 aa).

The tract at residues 1 to 26 (MAGPEPPMPLSRGGPGSASLSPPRGD) is disordered. S21 bears the Phosphoserine mark. The region spanning 27–102 (RTLLVRHLPA…HTLVVEFAKE (76 aa)) is the RRM 1 domain. Disordered stretches follow at residues 106–133 (VHSP…EKKE), 213–282 (MPLH…VRKK), and 337–363 (ETQP…FGKI). S108 carries the post-translational modification Phosphoserine. Over residues 115 to 133 (TEKKKRLDDTVENDKEKKE) the composition is skewed to basic and acidic residues. The segment covering 217–230 (APLPPTSPQPPEEP) has biased composition (pro residues). At S349 the chain carries Phosphoserine. The RRM 2 domain occupies 418 to 501 (CRIYVKNLAR…KPMVVQFARS (84 aa)).

As to quaternary structure, component of the U11/U12 snRNPs that are part of the U12-type spliceosome. Found in a complex with m(7)G-capped U12 snRNA. Interacts with PDCD7.

It is found in the nucleus. In terms of biological role, participates in pre-mRNA U12-dependent splicing, performed by the minor spliceosome which removes U12-type introns. U12-type introns comprises less than 1% of all non-coding sequences. Binds to the 3'-stem-loop of m(7)G-capped U12 snRNA. The sequence is that of RNA-binding region-containing protein 3 (Rnpc3) from Mus musculus (Mouse).